The chain runs to 53 residues: UPF0337 protein LJ_0034.1 (53 aa).

Residues 27–53 (AREVEGKAQQAKGKVKSKATEVKEDLE) form a disordered region. Basic and acidic residues predominate over residues 44 to 53 (KATEVKEDLE).

The protein belongs to the UPF0337 (CsbD) family.

This Lactobacillus johnsonii (strain CNCM I-12250 / La1 / NCC 533) protein is UPF0337 protein LJ_0034.1.